The primary structure comprises 1327 residues: Vascular endothelial growth factor receptor 1 (1327 aa).

A signal peptide spans 1–24 (MPRQLLSGTVLLGAAFLLAGSTSG). Topologically, residues 25 to 749 (SKLKVPVLSV…GTVERSNLEL (725 aa)) are extracellular. Ig-like C2-type domains are found at residues 30–121 (PVLS…SIVY), 120–222 (VYVF…HRET), 227–323 (DIKL…TTVI), 331–417 (NLKR…LTVT), 424–545 (PQIY…RNVS), 552–644 (PSGF…KDVS), and 651–737 (PALL…AYVT). 5 N-linked (GlcNAc...) asparagine glycosylation sites follow: N48, N73, N82, N98, and N125. C51 and C105 are disulfide-bonded. C154 and C203 are oxidised to a cystine. N247 carries an N-linked (GlcNAc...) asparagine glycan. An intrachain disulfide couples C248 to C307. N-linked (GlcNAc...) asparagine glycans are attached at residues N319, N383, N398, N409, N413, N470, N512, N543, N593, N615, and N663. A disulfide bridge links C450 with C531. Cysteines 573 and 626 form a disulfide. The cysteines at positions 672 and 721 are disulfide-linked. A helical membrane pass occupies residues 750 to 770 (ITLTCTCVAATLFWLLLTLFI). Topologically, residues 771-1327 (RKLKRPYFSE…SVVHYSQPSI (557 aa)) are cytoplasmic. One can recognise a Protein kinase domain in the interval 819–1151 (LKLGKSLGHG…ELVKRLGDLL (333 aa)). ATP contacts are provided by residues 825-833 (LGHGAFGKV) and K853. Residues 950-971 (ASVTSSESFASSGFQEDKSLSD) are disordered. Positions 951-961 (SVTSSESFASS) are enriched in low complexity. D1015 serves as the catalytic Proton acceptor. Y1046, Y1162, Y1202, Y1231, Y1316, and Y1322 each carry phosphotyrosine; by autocatalysis.

The protein belongs to the protein kinase superfamily. Tyr protein kinase family. CSF-1/PDGF receptor subfamily. In terms of assembly, interacts with VEGFA, VEGFB and PGF. Monomer in the absence of bound VEGFA, VEGFB or PGF. Homodimer in the presence of bound VEGFA, VEGFB and PGF. Autophosphorylated on tyrosine residues upon ligand binding.

The protein resides in the cell membrane. It localises to the endosome. The protein localises to the secreted. It carries out the reaction L-tyrosyl-[protein] + ATP = O-phospho-L-tyrosyl-[protein] + ADP + H(+). Its activity is regulated as follows. Present in an inactive conformation in the absence of bound ligand. Binding of VEGFA, VEGFB or PGF leads to dimerization and activation by autophosphorylation on tyrosine residues. Tyrosine-protein kinase that acts as a cell-surface receptor for VEGFA, VEGFB and PGF, and plays an essential role in the regulation of angiogenesis, cell survival, cell migration, macrophage function, and chemotaxis. Acts as a positive regulator of postnatal retinal hyaloid vessel regression. Has very high affinity for VEGFA and relatively low protein kinase activity; may function as a negative regulator of VEGFA signaling by limiting the amount of free VEGFA and preventing its binding to KDR. Ligand binding leads to the activation of several signaling cascades. Activation of PLCG1 leads to the production of the cellular signaling molecules diacylglycerol and inositol 1,4,5-trisphosphate and the activation of protein kinase C. Mediates phosphorylation of PIK3R1, the regulatory subunit of phosphatidylinositol 3-kinase, leading to activation of phosphatidylinositol kinase and the downstream signaling pathway. Mediates activation of MAPK1/ERK2, MAPK3/ERK1 and the MAP kinase signaling pathway, as well as of the AKT1 signaling pathway. Phosphorylates PLCG1. Promotes phosphorylation of AKT1 and CBL. The sequence is that of Vascular endothelial growth factor receptor 1 (FLT1) from Gallus gallus (Chicken).